The following is a 282-amino-acid chain: Light-independent protochlorophyllide reductase iron-sulfur ATP-binding protein (282 aa).

Residues 10–15 (GIGKST) and lysine 39 each bind ATP. Serine 14 is a binding site for Mg(2+). Positions 95 and 129 each coordinate [4Fe-4S] cluster. 180 to 181 (NR) serves as a coordination point for ATP.

The protein belongs to the NifH/BchL/ChlL family. Homodimer. Protochlorophyllide reductase is composed of three subunits; ChlL, ChlN and ChlB. Requires [4Fe-4S] cluster as cofactor.

It is found in the plastid. The protein resides in the cyanelle. It catalyses the reaction chlorophyllide a + oxidized 2[4Fe-4S]-[ferredoxin] + 2 ADP + 2 phosphate = protochlorophyllide a + reduced 2[4Fe-4S]-[ferredoxin] + 2 ATP + 2 H2O. Its pathway is porphyrin-containing compound metabolism; chlorophyll biosynthesis (light-independent). In terms of biological role, component of the dark-operative protochlorophyllide reductase (DPOR) that uses Mg-ATP and reduced ferredoxin to reduce ring D of protochlorophyllide (Pchlide) to form chlorophyllide a (Chlide). This reaction is light-independent. The L component serves as a unique electron donor to the NB-component of the complex, and binds Mg-ATP. This chain is Light-independent protochlorophyllide reductase iron-sulfur ATP-binding protein, found in Cyanophora paradoxa.